A 273-amino-acid polypeptide reads, in one-letter code: Dermonecrotic toxin LdSicTox-alphaIB3ai (273 aa).

His-5 is a catalytic residue. The Mg(2+) site is built by Glu-25 and Asp-27. His-41 functions as the Nucleophile in the catalytic mechanism. Intrachain disulfides connect Cys-45–Cys-51 and Cys-47–Cys-190. Mg(2+) is bound at residue Asp-85.

It belongs to the arthropod phospholipase D family. Class II subfamily. The cofactor is Mg(2+). Expressed by the venom gland.

The protein localises to the secreted. It catalyses the reaction an N-(acyl)-sphingosylphosphocholine = an N-(acyl)-sphingosyl-1,3-cyclic phosphate + choline. The enzyme catalyses an N-(acyl)-sphingosylphosphoethanolamine = an N-(acyl)-sphingosyl-1,3-cyclic phosphate + ethanolamine. The catalysed reaction is a 1-acyl-sn-glycero-3-phosphocholine = a 1-acyl-sn-glycero-2,3-cyclic phosphate + choline. It carries out the reaction a 1-acyl-sn-glycero-3-phosphoethanolamine = a 1-acyl-sn-glycero-2,3-cyclic phosphate + ethanolamine. Its function is as follows. Dermonecrotic toxins cleave the phosphodiester linkage between the phosphate and headgroup of certain phospholipids (sphingolipid and lysolipid substrates), forming an alcohol (often choline) and a cyclic phosphate. This toxin acts on sphingomyelin (SM). It may also act on ceramide phosphoethanolamine (CPE), lysophosphatidylcholine (LPC) and lysophosphatidylethanolamine (LPE), but not on lysophosphatidylserine (LPS), and lysophosphatidylglycerol (LPG). It acts by transphosphatidylation, releasing exclusively cyclic phosphate products as second products. Induces dermonecrosis, hemolysis, increased vascular permeability, edema, inflammatory response, and platelet aggregation. The sequence is that of Dermonecrotic toxin LdSicTox-alphaIB3ai from Loxosceles deserta (Desert recluse spider).